The following is a 312-amino-acid chain: Ribosomal protein L11 methyltransferase (312 aa).

The S-adenosyl-L-methionine site is built by Thr-160, Gly-181, Asp-203, and Asn-246.

It belongs to the methyltransferase superfamily. PrmA family.

The protein localises to the cytoplasm. The catalysed reaction is L-lysyl-[protein] + 3 S-adenosyl-L-methionine = N(6),N(6),N(6)-trimethyl-L-lysyl-[protein] + 3 S-adenosyl-L-homocysteine + 3 H(+). Methylates ribosomal protein L11. This Staphylococcus aureus (strain COL) protein is Ribosomal protein L11 methyltransferase.